Consider the following 436-residue polypeptide: tRNA-2-methylthio-N(6)-dimethylallyladenosine synthase (436 aa).

The 117-residue stretch at arginine 5–glycine 121 folds into the MTTase N-terminal domain. [4Fe-4S] cluster contacts are provided by cysteine 14, cysteine 50, cysteine 84, cysteine 158, cysteine 162, and cysteine 165. A Radical SAM core domain is found at alanine 144–alanine 374. Positions methionine 373–glycine 435 constitute a TRAM domain.

The protein belongs to the methylthiotransferase family. MiaB subfamily. As to quaternary structure, monomer. Requires [4Fe-4S] cluster as cofactor.

The protein resides in the cytoplasm. The enzyme catalyses N(6)-dimethylallyladenosine(37) in tRNA + (sulfur carrier)-SH + AH2 + 2 S-adenosyl-L-methionine = 2-methylsulfanyl-N(6)-dimethylallyladenosine(37) in tRNA + (sulfur carrier)-H + 5'-deoxyadenosine + L-methionine + A + S-adenosyl-L-homocysteine + 2 H(+). Catalyzes the methylthiolation of N6-(dimethylallyl)adenosine (i(6)A), leading to the formation of 2-methylthio-N6-(dimethylallyl)adenosine (ms(2)i(6)A) at position 37 in tRNAs that read codons beginning with uridine. This is tRNA-2-methylthio-N(6)-dimethylallyladenosine synthase from Cereibacter sphaeroides (strain ATCC 17023 / DSM 158 / JCM 6121 / CCUG 31486 / LMG 2827 / NBRC 12203 / NCIMB 8253 / ATH 2.4.1.) (Rhodobacter sphaeroides).